Consider the following 130-residue polypeptide: Modulator protein MzrA (130 aa).

Topologically, residues 1 to 15 (MIAAFIKRHAPQRRL) are cytoplasmic. The helical transmembrane segment at 16–36 (SLWLALPVVALLALVMMPALF) threads the bilayer. Over 37 to 130 (RHDSALQIRA…RISFKPQSIG (94 aa)) the chain is Periplasmic.

This sequence belongs to the MzrA family. Interacts with EnvZ.

It is found in the cell inner membrane. Modulates the activity of the EnvZ/OmpR two-component regulatory system, probably by directly modulating EnvZ enzymatic activity and increasing stability of phosphorylated OmpR. The protein is Modulator protein MzrA of Erwinia tasmaniensis (strain DSM 17950 / CFBP 7177 / CIP 109463 / NCPPB 4357 / Et1/99).